We begin with the raw amino-acid sequence, 462 residues long: NADH-quinone oxidoreductase subunit N 1 (462 aa).

15 helical membrane-spanning segments follow: residues 4–24 (FVVA…VLCL), 32–52 (AGFY…WAVA), 60–80 (IACF…ALLA), 88–108 (FAGD…LLLA), 113–133 (WIML…LIAA), 148–168 (FLPG…IYAA), 178–198 (LAAP…GVGF), 220–240 (VAAF…LHVC), 251–271 (LWPA…LGAV), 279–299 (LLAY…MAVN), 307–327 (LFYL…VGAL), 351–371 (AGVL…AGFV), 374–394 (FLVF…FGII), 416–436 (LIAH…ALGV), and 439–459 (AGLV…AALF).

This sequence belongs to the complex I subunit 2 family. NDH-1 is composed of 14 different subunits. Subunits NuoA, H, J, K, L, M, N constitute the membrane sector of the complex.

It is found in the cell inner membrane. The enzyme catalyses a quinone + NADH + 5 H(+)(in) = a quinol + NAD(+) + 4 H(+)(out). NDH-1 shuttles electrons from NADH, via FMN and iron-sulfur (Fe-S) centers, to quinones in the respiratory chain. The immediate electron acceptor for the enzyme in this species is believed to be ubiquinone. Couples the redox reaction to proton translocation (for every two electrons transferred, four hydrogen ions are translocated across the cytoplasmic membrane), and thus conserves the redox energy in a proton gradient. This Solidesulfovibrio magneticus (strain ATCC 700980 / DSM 13731 / RS-1) (Desulfovibrio magneticus) protein is NADH-quinone oxidoreductase subunit N 1.